Reading from the N-terminus, the 307-residue chain is UDP-3-O-acyl-N-acetylglucosamine deacetylase (307 aa).

Residues H78, H241, and D245 each contribute to the Zn(2+) site. H268 serves as the catalytic Proton donor.

Belongs to the LpxC family. It depends on Zn(2+) as a cofactor.

It carries out the reaction a UDP-3-O-[(3R)-3-hydroxyacyl]-N-acetyl-alpha-D-glucosamine + H2O = a UDP-3-O-[(3R)-3-hydroxyacyl]-alpha-D-glucosamine + acetate. The protein operates within glycolipid biosynthesis; lipid IV(A) biosynthesis; lipid IV(A) from (3R)-3-hydroxytetradecanoyl-[acyl-carrier-protein] and UDP-N-acetyl-alpha-D-glucosamine: step 2/6. Catalyzes the hydrolysis of UDP-3-O-myristoyl-N-acetylglucosamine to form UDP-3-O-myristoylglucosamine and acetate, the committed step in lipid A biosynthesis. The sequence is that of UDP-3-O-acyl-N-acetylglucosamine deacetylase from Acidovorax sp. (strain JS42).